Reading from the N-terminus, the 129-residue chain is uncharacterized protein (129 aa).

The first 24 residues, 1-24 (MAFGWHSMHGSIIWFLQIAQLSTA), serve as a signal peptide directing secretion. The next 2 helical transmembrane spans lie at 38–58 (ISNL…CAIF) and 95–115 (IAHI…FTPL).

The protein resides in the membrane. This is an uncharacterized protein from Saccharomyces cerevisiae (strain ATCC 204508 / S288c) (Baker's yeast).